We begin with the raw amino-acid sequence, 450 residues long: Glucose-6-phosphate isomerase (450 aa).

Catalysis depends on E290, which acts as the Proton donor. Catalysis depends on residues H311 and K425.

It belongs to the GPI family.

It localises to the cytoplasm. The enzyme catalyses alpha-D-glucose 6-phosphate = beta-D-fructose 6-phosphate. Its pathway is carbohydrate biosynthesis; gluconeogenesis. The protein operates within carbohydrate degradation; glycolysis; D-glyceraldehyde 3-phosphate and glycerone phosphate from D-glucose: step 2/4. Catalyzes the reversible isomerization of glucose-6-phosphate to fructose-6-phosphate. The polypeptide is Glucose-6-phosphate isomerase (Alkaliphilus metalliredigens (strain QYMF)).